Here is a 152-residue protein sequence, read N- to C-terminus: Flagellar assembly factor FliW (152 aa).

It belongs to the FliW family. As to quaternary structure, interacts with translational regulator CsrA and flagellin(s).

The protein resides in the cytoplasm. Acts as an anti-CsrA protein, binds CsrA and prevents it from repressing translation of its target genes, one of which is flagellin. Binds to flagellin and participates in the assembly of the flagellum. The sequence is that of Flagellar assembly factor FliW from Desulfitobacterium hafniense (strain Y51).